The following is a 96-amino-acid chain: Small ribosomal subunit protein bS6 (96 aa).

This sequence belongs to the bacterial ribosomal protein bS6 family.

In terms of biological role, binds together with bS18 to 16S ribosomal RNA. The sequence is that of Small ribosomal subunit protein bS6 from Streptococcus pyogenes serotype M1.